Here is a 364-residue protein sequence, read N- to C-terminus: tRNA 2-selenouridine synthase (364 aa).

The region spanning 14–137 is the Rhodanese domain; it reads LLADTPLIDV…LRQTAIQATW (124 aa). The active-site S-selanylcysteine intermediate is the Cys97.

Belongs to the SelU family. In terms of assembly, monomer.

The catalysed reaction is 5-methylaminomethyl-2-thiouridine(34) in tRNA + selenophosphate + (2E)-geranyl diphosphate + H2O + H(+) = 5-methylaminomethyl-2-selenouridine(34) in tRNA + (2E)-thiogeraniol + phosphate + diphosphate. It carries out the reaction 5-methylaminomethyl-2-thiouridine(34) in tRNA + (2E)-geranyl diphosphate = 5-methylaminomethyl-S-(2E)-geranyl-thiouridine(34) in tRNA + diphosphate. The enzyme catalyses 5-methylaminomethyl-S-(2E)-geranyl-thiouridine(34) in tRNA + selenophosphate + H(+) = 5-methylaminomethyl-2-(Se-phospho)selenouridine(34) in tRNA + (2E)-thiogeraniol. It catalyses the reaction 5-methylaminomethyl-2-(Se-phospho)selenouridine(34) in tRNA + H2O = 5-methylaminomethyl-2-selenouridine(34) in tRNA + phosphate. In terms of biological role, involved in the post-transcriptional modification of the uridine at the wobble position (U34) of tRNA(Lys), tRNA(Glu) and tRNA(Gln). Catalyzes the conversion of 2-thiouridine (S2U-RNA) to 2-selenouridine (Se2U-RNA). Acts in a two-step process involving geranylation of 2-thiouridine (S2U) to S-geranyl-2-thiouridine (geS2U) and subsequent selenation of the latter derivative to 2-selenouridine (Se2U) in the tRNA chain. The protein is tRNA 2-selenouridine synthase of Salmonella choleraesuis (strain SC-B67).